The chain runs to 196 residues: Fe/S biogenesis protein NfuA (196 aa).

Residues cysteine 154 and cysteine 157 each coordinate [4Fe-4S] cluster.

This sequence belongs to the NfuA family. As to quaternary structure, homodimer. The cofactor is [4Fe-4S] cluster.

Its function is as follows. Involved in iron-sulfur cluster biogenesis. Binds a 4Fe-4S cluster, can transfer this cluster to apoproteins, and thereby intervenes in the maturation of Fe/S proteins. Could also act as a scaffold/chaperone for damaged Fe/S proteins. The polypeptide is Fe/S biogenesis protein NfuA (Blochmanniella pennsylvanica (strain BPEN)).